The sequence spans 308 residues: Regulating synaptic membrane exocytosis protein 3 (308 aa).

A disordered region spans residues 86–120; that stretch reads STETGIAVEMRSRVTRQGSRESTDGSTNSNSSDGT. Residues 109–120 show a composition bias toward low complexity; it reads DGSTNSNSSDGT. Residues 156-274 form the C2 domain; sequence PMGDVHIAIM…DLSAAVTGWY (119 aa). Phosphoserine occurs at positions 295 and 298.

In terms of assembly, binds PPFIA3. Does not bind RAB3.

The protein resides in the synapse. Its function is as follows. Regulates synaptic membrane exocytosis. This is Regulating synaptic membrane exocytosis protein 3 (RIMS3) from Homo sapiens (Human).